A 266-amino-acid polypeptide reads, in one-letter code: Signal peptidase I (266 aa).

Over 1–20 (MQTDNTKSNTNKTAKQEWGS) the chain is Cytoplasmic. The helical transmembrane segment at 21–41 (FAFVICIALLIRILIMEPFNV) threads the bilayer. At 42–266 (PTGSMKATIL…IFRNLYNTDA (225 aa)) the chain is on the extracellular side. Catalysis depends on residues Ser45 and Lys108.

The protein belongs to the peptidase S26 family.

Its subcellular location is the cell membrane. It carries out the reaction Cleavage of hydrophobic, N-terminal signal or leader sequences from secreted and periplasmic proteins.. This Rickettsia conorii (strain ATCC VR-613 / Malish 7) protein is Signal peptidase I (lepB).